The following is a 281-amino-acid chain: Bifunctional protein FolD (281 aa).

Residues 164-166, serine 189, and isoleucine 230 each bind NADP(+); that span reads GRS.

This sequence belongs to the tetrahydrofolate dehydrogenase/cyclohydrolase family. In terms of assembly, homodimer.

The enzyme catalyses (6R)-5,10-methylene-5,6,7,8-tetrahydrofolate + NADP(+) = (6R)-5,10-methenyltetrahydrofolate + NADPH. It catalyses the reaction (6R)-5,10-methenyltetrahydrofolate + H2O = (6R)-10-formyltetrahydrofolate + H(+). The protein operates within one-carbon metabolism; tetrahydrofolate interconversion. Functionally, catalyzes the oxidation of 5,10-methylenetetrahydrofolate to 5,10-methenyltetrahydrofolate and then the hydrolysis of 5,10-methenyltetrahydrofolate to 10-formyltetrahydrofolate. This is Bifunctional protein FolD from Pelagibacter ubique (strain HTCC1062).